Reading from the N-terminus, the 352-residue chain is 2'-dehydrokanamycin reductase (352 aa).

This sequence belongs to the NAD(P)-dependent epimerase/dehydratase family.

The enzyme catalyses 2'-dehydrokanamycin A + NADPH + H(+) = kanamycin A + NADP(+). It functions in the pathway antibiotic biosynthesis; kanamycin biosynthesis. In terms of biological role, mediates the conversion of 2'-dehydrokanamycin A into kanamycin A. This is 2'-dehydrokanamycin reductase (kanK) from Streptomyces kanamyceticus.